The chain runs to 663 residues: Alcohol oxidase 2 (663 aa).

Asp8–Glu38 is an FAD binding site. His567 (proton acceptor) is an active-site residue. The Microbody targeting signal signature appears at Ala661–Phe663.

This sequence belongs to the GMC oxidoreductase family. Homooctamer. FAD is required as a cofactor.

The protein resides in the peroxisome matrix. The catalysed reaction is a primary alcohol + O2 = an aldehyde + H2O2. It participates in energy metabolism; methane degradation. Its function is as follows. Minor isoform of alcohol oxidase, which catalyzes the oxidation of methanol to formaldehyde and hydrogen peroxide, the first step in the methanol utilization pathway of methylotrophic yeasts. This is Alcohol oxidase 2 (AOX2) from Komagataella phaffii (strain ATCC 76273 / CBS 7435 / CECT 11047 / NRRL Y-11430 / Wegner 21-1) (Yeast).